The following is a 547-amino-acid chain: Cytochrome P450 78A1 (547 aa).

Over residues 84 to 94 the composition is skewed to low complexity; it reads ASSRCPGAAAP. A disordered region spans residues 84–104; that stretch reads ASSRCPGAAAPRPRRDGPRRR. C490 contacts heme.

It belongs to the cytochrome P450 family. Heme is required as a cofactor. As to expression, shoot apex.

The protein is Cytochrome P450 78A1 (CYP78A1) of Zea mays (Maize).